Consider the following 234-residue polypeptide: Purine nucleoside phosphorylase DeoD-type (234 aa).

His-4 lines the a purine D-ribonucleoside pocket. Residues Gly-20, Arg-24, Arg-43, and 87–90 (RIGT) contribute to the phosphate site. A purine D-ribonucleoside-binding positions include 179–181 (EME) and 203–204 (SD). The Proton donor role is filled by Asp-204.

The protein belongs to the PNP/UDP phosphorylase family. As to quaternary structure, homohexamer; trimer of homodimers.

The enzyme catalyses a purine D-ribonucleoside + phosphate = a purine nucleobase + alpha-D-ribose 1-phosphate. It carries out the reaction a purine 2'-deoxy-D-ribonucleoside + phosphate = a purine nucleobase + 2-deoxy-alpha-D-ribose 1-phosphate. In terms of biological role, catalyzes the reversible phosphorolytic breakdown of the N-glycosidic bond in the beta-(deoxy)ribonucleoside molecules, with the formation of the corresponding free purine bases and pentose-1-phosphate. This Helicobacter pylori (strain Shi470) protein is Purine nucleoside phosphorylase DeoD-type.